We begin with the raw amino-acid sequence, 359 residues long: Probable ribonucleotide transport ATP-binding protein mkl (359 aa).

Residues 28–264 (IEVNGLTKSF…DEPVVRQFLN (237 aa)) enclose the ABC transporter domain. ATP is bound at residue 60–67 (GPSGTGKS).

It belongs to the ABC transporter superfamily.

Functionally, not known, could be involved in the transport of ribonucleotides. This chain is Probable ribonucleotide transport ATP-binding protein mkl (mkl), found in Mycobacterium bovis (strain ATCC BAA-935 / AF2122/97).